A 346-amino-acid chain; its full sequence is N-acetyl-gamma-glutamyl-phosphate reductase (346 aa).

Residue C149 is part of the active site.

The protein belongs to the NAGSA dehydrogenase family. Type 1 subfamily.

It localises to the cytoplasm. The catalysed reaction is N-acetyl-L-glutamate 5-semialdehyde + phosphate + NADP(+) = N-acetyl-L-glutamyl 5-phosphate + NADPH + H(+). Its pathway is amino-acid biosynthesis; L-arginine biosynthesis; N(2)-acetyl-L-ornithine from L-glutamate: step 3/4. In terms of biological role, catalyzes the NADPH-dependent reduction of N-acetyl-5-glutamyl phosphate to yield N-acetyl-L-glutamate 5-semialdehyde. This chain is N-acetyl-gamma-glutamyl-phosphate reductase, found in Citrifermentans bemidjiense (strain ATCC BAA-1014 / DSM 16622 / JCM 12645 / Bem) (Geobacter bemidjiensis).